The sequence spans 429 residues: Enolase (429 aa).

A (2R)-2-phosphoglycerate-binding site is contributed by glutamine 163. Residue glutamate 205 is the Proton donor of the active site. Mg(2+)-binding residues include aspartate 242, glutamate 287, and aspartate 314. Residues lysine 339, arginine 368, serine 369, and lysine 390 each contribute to the (2R)-2-phosphoglycerate site. Catalysis depends on lysine 339, which acts as the Proton acceptor.

Belongs to the enolase family. In terms of assembly, homooctamer. Mg(2+) serves as cofactor.

The protein resides in the cytoplasm. It is found in the secreted. Its subcellular location is the cell surface. It carries out the reaction (2R)-2-phosphoglycerate = phosphoenolpyruvate + H2O. It functions in the pathway carbohydrate degradation; glycolysis; pyruvate from D-glyceraldehyde 3-phosphate: step 4/5. Its function is as follows. Catalyzes the reversible conversion of 2-phosphoglycerate (2-PG) into phosphoenolpyruvate (PEP). It is essential for the degradation of carbohydrates via glycolysis. The sequence is that of Enolase from Zymomonas mobilis subsp. mobilis (strain ATCC 31821 / ZM4 / CP4).